The sequence spans 30 residues: Arsenate respiratory reductase iron-sulfur subunit ArrB (30 aa).

The [4Fe-4S] cluster site is built by cysteine 12, cysteine 15, cysteine 18, and cysteine 22.

As to quaternary structure, heterodimer composed of one large subunit (ArrA) and one small subunit (ArrB). The cofactor is [4Fe-4S] cluster.

It localises to the periplasm. In terms of biological role, component of the arsenate respiratory reductase (Arr) complex, which catalyzes the reduction of arsenate (As(V)) to arsenite (As(III)). ArrB is probably the electron transfer subunit. This is Arsenate respiratory reductase iron-sulfur subunit ArrB from Chrysiogenes arsenatis.